An 839-amino-acid chain; its full sequence is DNA-directed RNA polymerase YonO (839 aa).

3 residues coordinate Mg(2+): aspartate 535, aspartate 537, and aspartate 539.

The protein belongs to the YRH RNA polymerase family. It depends on a divalent metal cation as a cofactor.

It carries out the reaction RNA(n) + a ribonucleoside 5'-triphosphate = RNA(n+1) + diphosphate. Its function is as follows. A single subunit DNA-dependent RNA polymerase (RNAP) that catalyzes the transcription of DNA into RNA using the four ribonucleoside triphosphates (rNTPs) as substrates. The enzyme is more highly processive than the multisubunit RNAP from E.coli but is considerably more error-prone. It has no detectable proof-reading function but can perform pyrophosphorolysis. Probably transcribes the late genes of the SPbeta phage starting from yonK. The sequence is that of DNA-directed RNA polymerase YonO (yonO) from Bacillus pumilus (Bacillus mesentericus).